A 535-amino-acid polypeptide reads, in one-letter code: Cytochrome P450 monooxygenase BOA7 (535 aa).

Residues serine 20–tryptophan 37 form a helical membrane-spanning segment. 4 N-linked (GlcNAc...) asparagine glycosylation sites follow: asparagine 65, asparagine 148, asparagine 180, and asparagine 420. Heme is bound at residue cysteine 478.

It belongs to the cytochrome P450 family. Heme is required as a cofactor.

The protein resides in the membrane. It functions in the pathway polyketide biosynthesis. Its function is as follows. Cytochrome P450 monooxygenase; part of the gene cluster B that mediates the biosynthesis of botcinic acid and its botcinin derivatives, acetate-derived polyketides that contribute to virulence when combined with the sesquiterpene botrydial. Botcinic acid and its derivatives have been shown to induce chlorosis and necrosis during host plant infection, but also have antifungal activities. Two polyketide synthases, BOA6 and BOA9, are involved in the biosynthesis of botcinins. BOA6 mediates the formation of the per-methylated tetraketide core by condensation of four units of malonyl-CoA with one unit of acetyl-CoA, which would be methylated in activated methylene groups to yield a bicyclic acid intermediate that could then either be converted to botrylactone derivatives or lose the starter acetate unit through a retro-Claisen type C-C bond cleavage to yield botcinin derivatives. The second polyketide synthase, BOA9, is probably required for the biosynthesis of the tetraketide side chain of botcinins. The methyltransferase (MT) domain within BOA6 is probably responsible for the incorporation of four methyl groups. The trans-enoyl reductase BOA5 might take over the enoyl reductase function of BOA6 that misses an ER domain. The monooxygenases BOA2, BOA3 and BOA4 might be involved in further hydroxylations at C4, C5 and C8, whereas BOA7, close to BOA9, could potentially be involved in the hydroxylation at C4 in the side chain of botcinins. This chain is Cytochrome P450 monooxygenase BOA7, found in Botryotinia fuckeliana (strain B05.10) (Noble rot fungus).